An 83-amino-acid polypeptide reads, in one-letter code: Apolipoprotein C-I, acidic form (83 aa).

The signal sequence occupies residues 1 to 26; sequence MRLFLSLPVLVVVLSMVLEGPAPAQG.

It belongs to the apolipoprotein C1 family.

The protein localises to the secreted. Its function is as follows. Inhibitor of lipoprotein binding to the low density lipoprotein (LDL) receptor, LDL receptor-related protein, and very low density lipoprotein (VLDL) receptor. Associates with high density lipoproteins (HDL) and the triacylglycerol-rich lipoproteins in the plasma and makes up about 10% of the protein of the VLDL and 2% of that of HDL. Appears to interfere directly with fatty acid uptake and is also the major plasma inhibitor of cholesteryl ester transfer protein (CETP). Binds free fatty acids and reduces their intracellular esterification. Modulates the interaction of APOE with beta-migrating VLDL and inhibits binding of beta-VLDL to the LDL receptor-related protein. In Pongo abelii (Sumatran orangutan), this protein is Apolipoprotein C-I, acidic form (APOC1A).